A 136-amino-acid polypeptide reads, in one-letter code: Ribosome-binding factor A (136 aa).

This sequence belongs to the RbfA family. Monomer. Binds 30S ribosomal subunits, but not 50S ribosomal subunits or 70S ribosomes.

Its subcellular location is the cytoplasm. In terms of biological role, one of several proteins that assist in the late maturation steps of the functional core of the 30S ribosomal subunit. Associates with free 30S ribosomal subunits (but not with 30S subunits that are part of 70S ribosomes or polysomes). Required for efficient processing of 16S rRNA. May interact with the 5'-terminal helix region of 16S rRNA. The protein is Ribosome-binding factor A of Serratia proteamaculans (strain 568).